The primary structure comprises 208 residues: Protein IncB (208 aa).

In terms of biological role, this protein is thought to be cis acting and to contain the putative attachment site on the DNA for the cellular partition apparatus. This chain is Protein IncB (incB), found in Escherichia coli.